We begin with the raw amino-acid sequence, 492 residues long: Protein adenylyltransferase Fic (492 aa).

Low complexity predominate over residues 1 to 17; sequence MCTEAEQPSPPAQQQEQ. Positions 1 to 25 are disordered; the sequence is MCTEAEQPSPPAQQQEQGNPPLCKA. A helical membrane pass occupies residues 33–55; that stretch reads LYRLVLLFVAGSLAAWTFHALSS. TPR repeat units follow at residues 118–151 and 152–186; these read ALGALRMAQDLYLAGKDDKAARLFEHALALAPRH and PEVLLRYGEFLEHNQRNIVLADQYYFQALTISPSN. Residues 243–248 carry the Inhibitory (S/T)XXXE(G/N) motif motif; that stretch reads SVGIEG. ATP is bound by residues Glu247 and 328–331; that span reads VGGH. The region spanning 297-432 is the Fido domain; that stretch reads ITIKDILELH…IRPFVRFIAD (136 aa). His375 is an active-site residue. Residues 379–386, 411–412, and Asn419 contribute to the ATP site; these read DGNGRTSR and YY.

Belongs to the fic family. As to quaternary structure, homodimer.

The protein localises to the membrane. The enzyme catalyses L-tyrosyl-[protein] + ATP = O-(5'-adenylyl)-L-tyrosyl-[protein] + diphosphate. It catalyses the reaction L-threonyl-[protein] + ATP = 3-O-(5'-adenylyl)-L-threonyl-[protein] + diphosphate. It carries out the reaction 3-O-(5'-adenylyl)-L-threonyl-[protein] + H2O = L-threonyl-[protein] + AMP + H(+). Its activity is regulated as follows. The side chain of Glu-247 determines which of the two opposing activities (AMPylase or de-AMPylase) will take place. In response to endoplasmic reticulum stress, mediates de-AMPylase activity. Adenylyltransferase activity is inhibited by the inhibitory helix present at the N-terminus: Glu-247 binds ATP and competes with ATP-binding at Arg-386, thereby preventing adenylyltransferase activity. In unstressed cells, disengagement of Glu-247 promotes adenylyltransferase activity. Activation dissociates ATP-binding from Glu-247, allowing ordered binding of the entire ATP moiety with the alpha-phosphate in an orientation that is productive for accepting an incoming target hydroxyl side chain. In terms of biological role, protein that can both mediate the addition of adenosine 5'-monophosphate (AMP) to specific residues of target proteins (AMPylation), and the removal of the same modification from target proteins (de-AMPylation), depending on the context. The side chain of Glu-247 determines which of the two opposing activities (AMPylase or de-AMPylase) will take place. Acts as a key regulator of the unfolded protein response (UPR) by mediating AMPylation or de-AMPylation of Hsc70-3/BiP. In unstressed cells, acts as an adenylyltransferase by mediating AMPylation of Hsc70-3/BiP at 'Thr-518', thereby inactivating it. In response to endoplasmic reticulum stress, acts as a phosphodiesterase by mediating removal of ATP (de-AMPylation) from Hsc70-3/BiP at 'Thr-518', leading to restore HSPA5/BiP activity. The polypeptide is Protein adenylyltransferase Fic (Drosophila sechellia (Fruit fly)).